Here is a 392-residue protein sequence, read N- to C-terminus: UDP-N-acetylglucosamine--N-acetylmuramyl-(pentapeptide) pyrophosphoryl-undecaprenol N-acetylglucosamine transferase (392 aa).

UDP-N-acetyl-alpha-D-glucosamine is bound by residues 14-16 (TGG), N124, R167, S195, I251, and Q296.

Belongs to the glycosyltransferase 28 family. MurG subfamily.

The protein localises to the cell inner membrane. The catalysed reaction is di-trans,octa-cis-undecaprenyl diphospho-N-acetyl-alpha-D-muramoyl-L-alanyl-D-glutamyl-meso-2,6-diaminopimeloyl-D-alanyl-D-alanine + UDP-N-acetyl-alpha-D-glucosamine = di-trans,octa-cis-undecaprenyl diphospho-[N-acetyl-alpha-D-glucosaminyl-(1-&gt;4)]-N-acetyl-alpha-D-muramoyl-L-alanyl-D-glutamyl-meso-2,6-diaminopimeloyl-D-alanyl-D-alanine + UDP + H(+). The protein operates within cell wall biogenesis; peptidoglycan biosynthesis. Cell wall formation. Catalyzes the transfer of a GlcNAc subunit on undecaprenyl-pyrophosphoryl-MurNAc-pentapeptide (lipid intermediate I) to form undecaprenyl-pyrophosphoryl-MurNAc-(pentapeptide)GlcNAc (lipid intermediate II). This Sphingopyxis alaskensis (strain DSM 13593 / LMG 18877 / RB2256) (Sphingomonas alaskensis) protein is UDP-N-acetylglucosamine--N-acetylmuramyl-(pentapeptide) pyrophosphoryl-undecaprenol N-acetylglucosamine transferase.